A 99-amino-acid chain; its full sequence is NADH-quinone oxidoreductase subunit K (99 aa).

The next 3 membrane-spanning stretches (helical) occupy residues 3–23 (PANY…GVLV), 28–48 (IVVF…LVTF), and 59–79 (VMAF…LAII).

It belongs to the complex I subunit 4L family. In terms of assembly, NDH-1 is composed of 14 different subunits. Subunits NuoA, H, J, K, L, M, N constitute the membrane sector of the complex.

The protein resides in the cell membrane. The enzyme catalyses a quinone + NADH + 5 H(+)(in) = a quinol + NAD(+) + 4 H(+)(out). NDH-1 shuttles electrons from NADH, via FMN and iron-sulfur (Fe-S) centers, to quinones in the respiratory chain. The immediate electron acceptor for the enzyme in this species is believed to be a menaquinone. Couples the redox reaction to proton translocation (for every two electrons transferred, four hydrogen ions are translocated across the cytoplasmic membrane), and thus conserves the redox energy in a proton gradient. The sequence is that of NADH-quinone oxidoreductase subunit K from Frankia alni (strain DSM 45986 / CECT 9034 / ACN14a).